The chain runs to 130 residues: Vascular-related unknown protein 3 (130 aa).

The segment at 45–81 is disordered; it reads DDSSMMSDAASPMGCVEEDTASSPSNRTEGYSGMEDN.

Functionally, involved in the regulation of plant growth. In Arabidopsis thaliana (Mouse-ear cress), this protein is Vascular-related unknown protein 3.